We begin with the raw amino-acid sequence, 181 residues long: Acetylcholinesterase (181 aa).

S76 (acyl-ester intermediate) is an active-site residue. Catalysis depends on E132, which acts as the Charge relay system. The segment at 162–181 (WQDQDNGGLPLTGNPTXPHN) is disordered.

It belongs to the type-B carboxylesterase/lipase family. The N-terminus is blocked. As to expression, expressed by the venom gland. Is also probably expressed by liver and muscle.

It localises to the synapse. Its subcellular location is the secreted. It is found in the cell membrane. The catalysed reaction is acetylcholine + H2O = choline + acetate + H(+). Its function is as follows. In venom, its toxic role is unclear: it could result in less musculatory control by rapidly hydrolyzing acetylcholine, or that it works synergistically with alkaline phosphatase (ALP) in paralyzing prey through hypotension. In muscle, it terminates signal transduction at the neuromuscular junction by rapid hydrolysis of the acetylcholine released into the synaptic cleft. In liver, its function is unclear: it could serve as a safeguard against any diffusion of acetylcholine from synapses into the circulation. The polypeptide is Acetylcholinesterase (ACHE) (Naja oxiana (Central Asian cobra)).